Here is a 463-residue protein sequence, read N- to C-terminus: Proton-coupled folate transporter (463 aa).

Over 1–27 (MVSPDDSPEIRDRPRPRRCLLPASVTV) the chain is Cytoplasmic. The chain crosses the membrane as a helical span at residues 28–46 (EPVIFLSMFALALQGPLAT). Residues 47–86 (QYLWDRLSADIGFNGTRTVGCAMNGSKSAGPEQQEVETLT) lie on the Extracellular side of the membrane. Residues N60 and N70 are each glycosylated (N-linked (GlcNAc...) asparagine). An intrachain disulfide couples C67 to C302. The helical transmembrane segment at 87-112 (AHWSLYINLGGFLVGLFSVMLLGPWS) threads the bilayer. The Cytoplasmic segment spans residues 113 to 116 (DKVG). The chain crosses the membrane as a helical span at residues 117–139 (RRPVLMLPCIGLALQAAVYLLVM). Topologically, residues 140 to 144 (YQELH) are extracellular. A helical membrane pass occupies residues 145 to 158 (VGYFLIGRFISGIS). The Cytoplasmic portion of the chain corresponds to 159 to 181 (GDFNMILAGCFAYIADVSDRQSR). D160 and E189 together coordinate H(+). A helical transmembrane segment spans residues 182–207 (TFRVAVLEACLGIAGMVASIIGGHWR). At 208 to 212 (KAQGY) the chain is on the extracellular side. The chain crosses the membrane as a helical span at residues 213–231 (INPFWLVFAVNLFTALYVY). At 232–270 (FCVEESVKDKKPARLFTHRHYQSFFRLFTVQGENNRRRK) the chain is on the cytoplasmic side. The helical transmembrane segment at 271-293 (LFLYSLALLVVVTVHMGAKNLFV) threads the bilayer. H(+) is bound at residue H285. Topologically, residues 294-306 (LYELSYPLCWDSD) are extracellular. A helical transmembrane segment spans residues 307 to 329 (LIGYGSAAEHLTYLSSLAGLRLF). The Cytoplasmic portion of the chain corresponds to 330–335 (QLCLAD). Residues 336–355 (SWVAEMGFISNISGLVVISL) traverse the membrane as a helical segment. The Extracellular portion of the chain corresponds to 356 to 359 (ASTT). The chain crosses the membrane as a helical span at residues 360-380 (PIMFTGYGLRFFAMATTPVIR). At 381–392 (SKLSKMVEEGEQ) the chain is on the cytoplasmic side. Residues 393 to 418 (GALFSSVACVEGLSFLLATGLFNSLY) traverse the membrane as a helical segment. Topologically, residues 419–426 (PATLHFMK) are extracellular. A helical membrane pass occupies residues 427 to 445 (GFPFLLGALLLLIPAGIIG). The Cytoplasmic segment spans residues 446-463 (LIEVCEQKPMYSQFSEIS).

The protein belongs to the major facilitator superfamily. SLC46A family. In terms of assembly, monomer.

The protein resides in the cell membrane. It is found in the apical cell membrane. It localises to the basolateral cell membrane. The protein localises to the endosome membrane. Its subcellular location is the cytoplasm. The catalysed reaction is folate(in) + H(+)(in) = folate(out) + H(+)(out). It catalyses the reaction (6S)-5-methyl-5,6,7,8-tetrahydrofolate(in) + H(+)(in) = (6S)-5-methyl-5,6,7,8-tetrahydrofolate(out) + H(+)(out). It carries out the reaction methotrexate(in) + H(+)(in) = methotrexate(out) + H(+)(out). The enzyme catalyses pemetrexed(in) + H(+)(in) = pemetrexed(out) + H(+)(out). Proton-coupled folate symporter that mediates folate absorption using an H(+) gradient as a driving force. Involved in the intestinal absorption of folates at the brush-border membrane of the proximal jejunum, and the transport from blood to cerebrospinal fluid across the choroid plexus. Functions at acidic pH via alternate outward- and inward-open conformation states. Protonation of residues in the outward open state primes the protein for transport. Binding of folate promotes breaking of salt bridge network and subsequent closure of the extracellular gate, leading to the inward-open state and release of protons and folate. Also able to transport antifolate drugs, such as methotrexate and pemetrexed. Also acts as a lower-affinity, pH-independent heme carrier protein and constitutes the main importer of heme in the intestine. Imports heme in the retina and retinal pigment epithelium, in neurons of the hippocampus, in hepatocytes and in the renal epithelial cells. The chain is Proton-coupled folate transporter from Xenopus laevis (African clawed frog).